Consider the following 74-residue polypeptide: Alpha-elapitoxin-Aa2d (74 aa).

5 cysteine pairs are disulfide-bonded: cysteine 3–cysteine 21, cysteine 14–cysteine 42, cysteine 27–cysteine 31, cysteine 46–cysteine 57, and cysteine 58–cysteine 63.

The protein belongs to the three-finger toxin family. Long-chain subfamily. Type II alpha-neurotoxin sub-subfamily. In terms of tissue distribution, expressed by the venom gland.

Its subcellular location is the secreted. Its function is as follows. Binds with high affinity to muscular (alpha-1/CHRNA1) and neuronal (alpha-7/CHRNA7) nicotinic acetylcholine receptor (nAChR) and inhibits acetylcholine from binding to the receptor, thereby impairing neuromuscular and neuronal transmission. This Acanthophis antarcticus (Common death adder) protein is Alpha-elapitoxin-Aa2d.